Consider the following 513-residue polypeptide: Ribonuclease Y (513 aa).

A helical membrane pass occupies residues 4–24; the sequence is NTAIIIAITTGFVAFIGGYFL. The 64-residue stretch at 203 to 266 folds into the KH domain; it reads TVAVIPLPNE…ETARMALEKL (64 aa). The HD domain occupies 329 to 422; that stretch reads VLKHSVEVAY…IQAADAISAA (94 aa).

This sequence belongs to the RNase Y family.

Its subcellular location is the cell membrane. Functionally, endoribonuclease that initiates mRNA decay. In Desulforudis audaxviator (strain MP104C), this protein is Ribonuclease Y.